A 130-amino-acid chain; its full sequence is uncharacterized protein (130 aa).

The disordered stretch occupies residues 1–100 (MSSNSDNTEC…AEPDAAKEEP (100 aa)). Basic and acidic residues-rich tracts occupy residues 57 to 75 (YTTR…KMMD) and 91 to 100 (AEPDAAKEEP).

This is an uncharacterized protein from Equine herpesvirus 1 (strain Ab4p) (EHV-1).